A 156-amino-acid chain; its full sequence is 6,7-dimethyl-8-ribityllumazine synthase (156 aa).

Residues F23, A57–E59, and A81–I83 each bind 5-amino-6-(D-ribitylamino)uracil. S86–T87 contributes to the (2S)-2-hydroxy-3-oxobutyl phosphate binding site. H89 (proton donor) is an active-site residue. Residue F114 participates in 5-amino-6-(D-ribitylamino)uracil binding. A (2S)-2-hydroxy-3-oxobutyl phosphate-binding site is contributed by R128.

The protein belongs to the DMRL synthase family.

It carries out the reaction (2S)-2-hydroxy-3-oxobutyl phosphate + 5-amino-6-(D-ribitylamino)uracil = 6,7-dimethyl-8-(1-D-ribityl)lumazine + phosphate + 2 H2O + H(+). It participates in cofactor biosynthesis; riboflavin biosynthesis; riboflavin from 2-hydroxy-3-oxobutyl phosphate and 5-amino-6-(D-ribitylamino)uracil: step 1/2. In terms of biological role, catalyzes the formation of 6,7-dimethyl-8-ribityllumazine by condensation of 5-amino-6-(D-ribitylamino)uracil with 3,4-dihydroxy-2-butanone 4-phosphate. This is the penultimate step in the biosynthesis of riboflavin. This Campylobacter fetus subsp. fetus (strain 82-40) protein is 6,7-dimethyl-8-ribityllumazine synthase.